The following is a 356-amino-acid chain: Ciliogenesis-associated TTC17-interacting protein (356 aa).

It belongs to the CATIP family. Expressed in tissues rich in motile cilia.

The protein resides in the nucleus. It is found in the cytoplasm. It localises to the cell membrane. The protein localises to the cytoskeleton. In terms of biological role, plays a role in primary ciliogenesis by modulating actin polymerization. This is Ciliogenesis-associated TTC17-interacting protein (catip) from Danio rerio (Zebrafish).